We begin with the raw amino-acid sequence, 214 residues long: Cell division protein SepF (214 aa).

The interval tyrosine 23–tyrosine 70 is disordered. Residues proline 36–alanine 58 are compositionally biased toward basic and acidic residues.

This sequence belongs to the SepF family. In terms of assembly, homodimer. Interacts with FtsZ.

The protein resides in the cytoplasm. Functionally, cell division protein that is part of the divisome complex and is recruited early to the Z-ring. Probably stimulates Z-ring formation, perhaps through the cross-linking of FtsZ protofilaments. Its function overlaps with FtsA. This chain is Cell division protein SepF, found in Mycolicibacterium paratuberculosis (strain ATCC BAA-968 / K-10) (Mycobacterium paratuberculosis).